Consider the following 447-residue polypeptide: Gamma-glutamyl phosphate reductase (447 aa).

Belongs to the gamma-glutamyl phosphate reductase family.

The protein resides in the cytoplasm. The catalysed reaction is L-glutamate 5-semialdehyde + phosphate + NADP(+) = L-glutamyl 5-phosphate + NADPH + H(+). It functions in the pathway amino-acid biosynthesis; L-proline biosynthesis; L-glutamate 5-semialdehyde from L-glutamate: step 2/2. In terms of biological role, catalyzes the NADPH-dependent reduction of L-glutamate 5-phosphate into L-glutamate 5-semialdehyde and phosphate. The product spontaneously undergoes cyclization to form 1-pyrroline-5-carboxylate. This is Gamma-glutamyl phosphate reductase from Methanosarcina acetivorans (strain ATCC 35395 / DSM 2834 / JCM 12185 / C2A).